A 114-amino-acid polypeptide reads, in one-letter code: uncharacterized protein (114 aa).

The 109-residue stretch at 6–114 (IFGKIIRREI…GGRSLAWPPG (109 aa)) folds into the HIT domain. Positions 98–102 (HLHIH) match the Histidine triad motif motif.

This is an uncharacterized protein from Synechococcus elongatus (strain ATCC 33912 / PCC 7942 / FACHB-805) (Anacystis nidulans R2).